Consider the following 98-residue polypeptide: Histone H4-like protein type G (98 aa).

A DNA-binding region spans residues 17-21 (KCHRK).

The protein belongs to the histone H4 family. The nucleosome is a histone octamer containing two molecules each of H2A, H2B, H3 and H4 assembled in one H3-H4 heterotetramer and two H2A-H2B heterodimers. The octamer wraps approximately 147 bp of DNA.

The protein resides in the nucleus. It is found in the chromosome. In terms of biological role, core component of nucleosome. Nucleosomes wrap and compact DNA into chromatin, limiting DNA accessibility to the cellular machineries which require DNA as a template. Histones thereby play a central role in transcription regulation, DNA repair, DNA replication and chromosomal stability. DNA accessibility is regulated via a complex set of post-translational modifications of histones, also called histone code, and nucleosome remodeling. This Homo sapiens (Human) protein is Histone H4-like protein type G.